Reading from the N-terminus, the 399-residue chain is Paraneoplastic antigen-like protein 6A (399 aa).

This sequence belongs to the PNMA family. In terms of tissue distribution, expressed in the brain.

The chain is Paraneoplastic antigen-like protein 6A from Homo sapiens (Human).